The primary structure comprises 441 residues: Keratin, type I cytoskeletal 15 (441 aa).

Residues 2–91 (LLLGHASTST…GGSDLLLGTS (90 aa)) are head. The interval 92–127 (GKEAMQNLNDRLASYLDKVRSLEGKNHELELKIKDW) is coil 1A. Positions 92–407 (GKEAMQNLND…MLLDSEDSKG (316 aa)) constitute an IF rod domain. Positions 128–149 (YSQVIPGTGGPDARDYGHLEKE) are linker 1. Residues 150-241 (IEDLQNKVNN…KNHEEDMKAA (92 aa)) are coil 1B. Residues 242–261 (SSGIAGQVNVELDAAPGTNL) form a linker 12 region. The segment at 262-403 (LDELDACRRD…ATYRMLLDSE (142 aa)) is coil 2. The tail stretch occupies residues 404-441 (DSKGSIINHKILTAIEKLVDGIVLSTEVLEKQIPVLSY).

This sequence belongs to the intermediate filament family. Heterotetramer of two type I and two type II keratins. As to expression, expressed in skin.

This chain is Keratin, type I cytoskeletal 15 (KRT15), found in Protopterus aethiopicus (Marbled lungfish).